A 294-amino-acid polypeptide reads, in one-letter code: Nucleotide-binding protein lp_0779 (294 aa).

12 to 19 contributes to the ATP binding site; that stretch reads GMSGAGKT. GTP is bound at residue 62–65; the sequence is DLRS.

It belongs to the RapZ-like family.

Displays ATPase and GTPase activities. This is Nucleotide-binding protein lp_0779 from Lactiplantibacillus plantarum (strain ATCC BAA-793 / NCIMB 8826 / WCFS1) (Lactobacillus plantarum).